A 393-amino-acid polypeptide reads, in one-letter code: Sex hormone-binding globulin (393 aa).

Positions 1-27 (MEGRGPLATSPRRRWLLLLLLLPHSHQ) are cleaved as a signal peptide. 2 consecutive Laminin G-like domains span residues 35-208 (VHLS…PRSC) and 215-381 (GSFF…THSC). Cystine bridges form between Cys-183–Cys-208 and Cys-353–Cys-381. Residues Asn-371 and Asn-387 are each glycosylated (N-linked (GlcNAc...) asparagine).

In terms of assembly, homodimer.

Its subcellular location is the secreted. Its function is as follows. Functions as an androgen transport protein, but may also be involved in receptor mediated processes. Each dimer binds one molecule of steroid. Specific for 5-alpha-dihydrotestosterone, testosterone, and 17-beta-estradiol. Regulates the plasma metabolic clearance rate of steroid hormones by controlling their plasma concentration. This chain is Sex hormone-binding globulin (SHBG), found in Crocuta crocuta (Spotted hyena).